The sequence spans 492 residues: Catalase-1 (492 aa).

Active-site residues include His65 and Asn138. A heme-binding site is contributed by Tyr348.

Belongs to the catalase family. In terms of assembly, homotetramer. The cofactor is heme.

The protein resides in the peroxisome. It is found in the glyoxysome. It carries out the reaction 2 H2O2 = O2 + 2 H2O. Functionally, occurs in almost all aerobically respiring organisms and serves to protect cells from the toxic effects of hydrogen peroxide. The sequence is that of Catalase-1 (CAT1) from Triticum aestivum (Wheat).